A 465-amino-acid polypeptide reads, in one-letter code: Macrophage metalloelastase (465 aa).

A signal peptide spans 1 to 21 (MKFLLVLVLLVSLQVSACGAA). A propeptide spans 22-101 (PMNESEFAEW…DVQHLRAVPQ (80 aa)) (activation peptide). Positions 86–93 (SRCGVPDV) match the Cysteine switch motif. Position 88 (Cys-88) interacts with Zn(2+). Ca(2+)-binding residues include Asp-120 and Asp-154. The Zn(2+) site is built by His-164 and Asp-166. The Ca(2+) site is built by Asp-171, Gly-172, Gly-174, and Thr-176. His-179 lines the Zn(2+) pocket. Ca(2+) is bound by residues Gly-186 and Asp-190. His-192 provides a ligand contact to Zn(2+). Ca(2+)-binding residues include Asp-194, Glu-195, and Glu-197. His-214 contributes to the Zn(2+) binding site. Glu-215 is a catalytic residue. Zn(2+)-binding residues include His-218 and His-224. The cysteines at positions 278 and 465 are disulfide-linked. 4 Hemopexin repeats span residues 281–324 (SLSF…WPTI), 325–371 (PSGI…GFPA), 373–421 (VKKI…FPGI), and 422–465 (RPKI…WFGC). Residue Asp-285 participates in Ca(2+) binding. N-linked (GlcNAc...) asparagine glycosylation occurs at Asn-313. Ca(2+) contacts are provided by Asp-377 and Asp-426.

It belongs to the peptidase M10A family. Requires Ca(2+) as cofactor. It depends on Zn(2+) as a cofactor.

The protein localises to the secreted. The protein resides in the extracellular space. It is found in the extracellular matrix. The enzyme catalyses Hydrolysis of soluble and insoluble elastin. Specific cleavages are also produced at 14-Ala-|-Leu-15 and 16-Tyr-|-Leu-17 in the B chain of insulin.. Its function is as follows. May be involved in tissue injury and remodeling. Has significant elastolytic activity. Can accept large and small amino acids at the P1' site, but has a preference for leucine. Aromatic or hydrophobic residues are preferred at the P1 site, with small hydrophobic residues (preferably alanine) occupying P3. The polypeptide is Macrophage metalloelastase (Mmp12) (Rattus norvegicus (Rat)).